A 91-amino-acid polypeptide reads, in one-letter code: Em-like protein (91 aa).

Composition is skewed to basic and acidic residues over residues Met-1–Glu-18 and Asp-31–Ile-51. The segment at Met-1–Pro-91 is disordered. Residues Lys-62 to Gly-73 show a composition bias toward gly residues. Positions Arg-75–Pro-91 are enriched in basic and acidic residues.

The protein belongs to the small hydrophilic plant seed protein family.

The protein is Em-like protein of Picea glauca (White spruce).